We begin with the raw amino-acid sequence, 302 residues long: Calpain-1 catalytic subunit (302 aa).

The interval 1-114 (RESGCSFVLA…KRAGTQELDD (114 aa)) is domain III. Residues 115-130 (QIQANLPDEQVLSAEE) form a linker region. A domain IV region spans residues 131–301 (IDENFKALFR…LFKWLQLTMF (171 aa)). EF-hand domains are found at residues 173–206 (FSME…NRIR), 203–238 (NRIR…AGFK), and 268–302 (VRLE…TMFA). The Ca(2+) site is built by Asp-186, Asp-188, Asn-190, Lys-192, Glu-197, Asp-216, Asp-218, Ser-220, Ser-222, and Glu-227.

The protein belongs to the peptidase C2 family. Forms a heterodimer with a small (regulatory) subunit CAPNS1. Requires Ca(2+) as cofactor. Post-translationally, the N-terminus is blocked. In terms of processing, undergoes calcium-induced successive autoproteolytic cleavages that generate a membrane-bound 78 kDa active form and an intracellular 75 kDa active form. Calpastatin reduces with high efficiency the transition from 78 kDa to 75 kDa calpain forms. In terms of tissue distribution, ubiquitous.

The protein resides in the cytoplasm. Its subcellular location is the cell membrane. It carries out the reaction Broad endopeptidase specificity.. Its activity is regulated as follows. Activated by micromolar concentrations of calcium and inhibited by calpastatin. Its function is as follows. Calcium-regulated non-lysosomal thiol-protease which catalyzes limited proteolysis of substrates involved in cytoskeletal remodeling and signal transduction. Proteolytically cleaves CTBP1. Cleaves and activates caspase-7 (CASP7). This Oryctolagus cuniculus (Rabbit) protein is Calpain-1 catalytic subunit.